A 177-amino-acid chain; its full sequence is MNYIITPVNQNLITAILKDPITGEWNIPILTFNANYDNPFYDDLNVLNNDHKYRQKIIDYFYTCLTEKWLYKDPVFEQLLPYFKISKTKFEGKVCLITNNKKPDMDSNIIYKKFIFKYIETFFVTRIFVEKILKSYVKHTNTKWYDLLNNKTILKGLFAYKIKKIIIGIIENIRNKK.

This is an uncharacterized protein from Acanthamoeba polyphaga (Amoeba).